Here is a 90-residue protein sequence, read N- to C-terminus: Cell division topological specificity factor (90 aa).

Belongs to the MinE family.

Prevents the cell division inhibition by proteins MinC and MinD at internal division sites while permitting inhibition at polar sites. This ensures cell division at the proper site by restricting the formation of a division septum at the midpoint of the long axis of the cell. This Lachnoclostridium phytofermentans (strain ATCC 700394 / DSM 18823 / ISDg) (Clostridium phytofermentans) protein is Cell division topological specificity factor.